Here is a 491-residue protein sequence, read N- to C-terminus: Cobyric acid synthase (491 aa).

A GATase cobBQ-type domain is found at 246-432 (RKLIACPILP…VHGLLADAEL (187 aa)). The active-site Nucleophile is the cysteine 328. Histidine 424 is an active-site residue.

This sequence belongs to the CobB/CobQ family. CobQ subfamily.

The protein operates within cofactor biosynthesis; adenosylcobalamin biosynthesis. In terms of biological role, catalyzes amidations at positions B, D, E, and G on adenosylcobyrinic A,C-diamide. NH(2) groups are provided by glutamine, and one molecule of ATP is hydrogenolyzed for each amidation. This Novosphingobium aromaticivorans (strain ATCC 700278 / DSM 12444 / CCUG 56034 / CIP 105152 / NBRC 16084 / F199) protein is Cobyric acid synthase.